A 966-amino-acid polypeptide reads, in one-letter code: Glycine dehydrogenase (decarboxylating) (966 aa).

Lys-713 bears the N6-(pyridoxal phosphate)lysine mark.

The protein belongs to the GcvP family. In terms of assembly, the glycine cleavage system is composed of four proteins: P, T, L and H. It depends on pyridoxal 5'-phosphate as a cofactor.

The catalysed reaction is N(6)-[(R)-lipoyl]-L-lysyl-[glycine-cleavage complex H protein] + glycine + H(+) = N(6)-[(R)-S(8)-aminomethyldihydrolipoyl]-L-lysyl-[glycine-cleavage complex H protein] + CO2. In terms of biological role, the glycine cleavage system catalyzes the degradation of glycine. The P protein binds the alpha-amino group of glycine through its pyridoxal phosphate cofactor; CO(2) is released and the remaining methylamine moiety is then transferred to the lipoamide cofactor of the H protein. This chain is Glycine dehydrogenase (decarboxylating), found in Psychromonas ingrahamii (strain DSM 17664 / CCUG 51855 / 37).